The sequence spans 646 residues: Threonine--tRNA ligase (646 aa).

The TGS domain occupies 1–61 (MIKITFPDGS…NEDANFVLYK (61 aa)). The catalytic stretch occupies residues 242-541 (DHRKIGKEMD…LIEHTAGKFP (300 aa)). Zn(2+)-binding residues include Cys337, His388, and His518.

This sequence belongs to the class-II aminoacyl-tRNA synthetase family. Homodimer. Requires Zn(2+) as cofactor.

The protein resides in the cytoplasm. The enzyme catalyses tRNA(Thr) + L-threonine + ATP = L-threonyl-tRNA(Thr) + AMP + diphosphate + H(+). Functionally, catalyzes the attachment of threonine to tRNA(Thr) in a two-step reaction: L-threonine is first activated by ATP to form Thr-AMP and then transferred to the acceptor end of tRNA(Thr). Also edits incorrectly charged L-seryl-tRNA(Thr). The chain is Threonine--tRNA ligase from Phocaeicola vulgatus (strain ATCC 8482 / DSM 1447 / JCM 5826 / CCUG 4940 / NBRC 14291 / NCTC 11154) (Bacteroides vulgatus).